The following is a 128-amino-acid chain: 3-aminoacrylate deaminase RutC (128 aa).

This sequence belongs to the RutC family. As to quaternary structure, homotrimer.

The enzyme catalyses (Z)-3-aminoacrylate + H2O + H(+) = 3-oxopropanoate + NH4(+). Involved in pyrimidine catabolism. Catalyzes the deamination of 3-aminoacrylate to malonic semialdehyde, a reaction that can also occur spontaneously. RutC may facilitate the reaction and modulate the metabolic fitness, rather than catalyzing essential functions. This is 3-aminoacrylate deaminase RutC from Escherichia coli O157:H7.